We begin with the raw amino-acid sequence, 354 residues long: Neutral protease 2 homolog AN7962 (354 aa).

The signal sequence occupies residues 1–19; the sequence is MKFIAPIALLGMFQAASAS. The propeptide occupies 20 to 178; that stretch reads PVDIKTSNAG…GAQLSKLSKR (159 aa). 2 disulfide bridges follow: C184–C255 and C262–C280. A Zn(2+)-binding site is contributed by H305. Residue E306 is part of the active site. Residues H309 and D320 each coordinate Zn(2+).

Belongs to the peptidase M35 family. Zn(2+) serves as cofactor.

The protein localises to the secreted. It carries out the reaction Preferential cleavage of bonds with hydrophobic residues in P1'. Also 3-Asn-|-Gln-4 and 8-Gly-|-Ser-9 bonds in insulin B chain.. Its function is as follows. Secreted metalloproteinase that allows assimilation of proteinaceous substrates. Shows high activities on basic nuclear substrates such as histone and protamine. In Emericella nidulans (strain FGSC A4 / ATCC 38163 / CBS 112.46 / NRRL 194 / M139) (Aspergillus nidulans), this protein is Neutral protease 2 homolog AN7962.